Consider the following 176-residue polypeptide: ATP-dependent protease subunit HslV (176 aa).

Thr2 is a catalytic residue. The Na(+) site is built by Gly157, Cys160, and Thr163.

The protein belongs to the peptidase T1B family. HslV subfamily. A double ring-shaped homohexamer of HslV is capped on each side by a ring-shaped HslU homohexamer. The assembly of the HslU/HslV complex is dependent on binding of ATP.

It is found in the cytoplasm. The catalysed reaction is ATP-dependent cleavage of peptide bonds with broad specificity.. Allosterically activated by HslU binding. Protease subunit of a proteasome-like degradation complex believed to be a general protein degrading machinery. In Salmonella gallinarum (strain 287/91 / NCTC 13346), this protein is ATP-dependent protease subunit HslV.